Here is a 196-residue protein sequence, read N- to C-terminus: MPLRPIIILPDKRLRLVARPVASVDSEVRALMDDMLETMYEAPGIGLAATQIAVDRRVIVLDVAKRRDDSAKADPICLANPEILWASEELSSYEEGCLSIPEFYEEVFRPEKVRVGYLDRDGRRREIEADGLLATCLQHEIDHLNGVLFIDHISRLKRARIIKKFEKAAKLDAQEPKRAPHSPHTDAQKPGAASDL.

Positions 97 and 139 each coordinate Fe cation. E140 is a catalytic residue. Residue H143 participates in Fe cation binding. The span at 171-187 shows a compositional bias: basic and acidic residues; sequence LDAQEPKRAPHSPHTDA. Residues 171 to 196 form a disordered region; it reads LDAQEPKRAPHSPHTDAQKPGAASDL.

Belongs to the polypeptide deformylase family. Requires Fe(2+) as cofactor.

It carries out the reaction N-terminal N-formyl-L-methionyl-[peptide] + H2O = N-terminal L-methionyl-[peptide] + formate. Its function is as follows. Removes the formyl group from the N-terminal Met of newly synthesized proteins. Requires at least a dipeptide for an efficient rate of reaction. N-terminal L-methionine is a prerequisite for activity but the enzyme has broad specificity at other positions. In Methylocella silvestris (strain DSM 15510 / CIP 108128 / LMG 27833 / NCIMB 13906 / BL2), this protein is Peptide deformylase.